Consider the following 443-residue polypeptide: Adenylate cyclase (443 aa).

Helical transmembrane passes span 47–69 (VLTI…QLAT), 74–93 (WYIA…VPLL), 98–120 (GLVA…GWDV), 124–143 (AGAQ…LVGI), 148–167 (LAVG…EFLV), and 180–202 (SVSF…WFAL). The Cytoplasmic portion of the chain corresponds to 203–443 (RDTARAEAVM…RGAEPRTAGV (241 aa)). The region spanning 251–378 (SVLFADIVGF…DAVNVASRME (128 aa)) is the Guanylate cyclase domain. Mg(2+) contacts are provided by aspartate 256 and aspartate 300.

This sequence belongs to the adenylyl cyclase class-4/guanylyl cyclase family. Homodimer. Can also exist as monomer. The cofactor is Mg(2+). Requires Mn(2+) as cofactor.

The protein localises to the cell membrane. It catalyses the reaction ATP = 3',5'-cyclic AMP + diphosphate. In Mycobacterium bovis (strain ATCC BAA-935 / AF2122/97), this protein is Adenylate cyclase (cya).